Here is a 152-residue protein sequence, read N- to C-terminus: Nucleoside diphosphate kinase (152 aa).

ATP is bound by residues K11, F59, R87, T93, R104, and N114. H117 serves as the catalytic Pros-phosphohistidine intermediate.

It belongs to the NDK family. In terms of assembly, homotetramer. Mg(2+) is required as a cofactor.

The protein resides in the cytoplasm. It carries out the reaction a 2'-deoxyribonucleoside 5'-diphosphate + ATP = a 2'-deoxyribonucleoside 5'-triphosphate + ADP. The enzyme catalyses a ribonucleoside 5'-diphosphate + ATP = a ribonucleoside 5'-triphosphate + ADP. Major role in the synthesis of nucleoside triphosphates other than ATP. The ATP gamma phosphate is transferred to the NDP beta phosphate via a ping-pong mechanism, using a phosphorylated active-site intermediate. This chain is Nucleoside diphosphate kinase, found in Prochlorococcus marinus (strain MIT 9312).